The sequence spans 260 residues: Protein TONNEAU 1a (260 aa).

Residues 73 to 105 (SGRLLSALICEYLDWAQLNHTLIVYQPESNLPK) enclose the LisH domain. 2 disordered regions span residues 147–224 (TQGM…EEVT) and 236–260 (DRKT…EGRD). Residues 161–175 (ESSSSLESRNPPRRS) are compositionally biased toward low complexity. Residues 248-260 (NVRDGTNEEEGRD) show a composition bias toward basic and acidic residues.

In terms of assembly, interacts with CEN1, LNG1/TRM2 and LNG2/TRM1 (via C-terminus).

The protein resides in the cytoplasm. Its subcellular location is the cytoskeleton. Involved in the control of the dynamic organization of the cortical cytoskeleton. May play a role in the organization of microtubule arrays at the centrosome through interaction with centrin 1 (CEN1). The polypeptide is Protein TONNEAU 1a (TON1A) (Arabidopsis thaliana (Mouse-ear cress)).